The chain runs to 285 residues: Acetylglutamate kinase (285 aa).

Substrate is bound by residues 64–65 (GG), arginine 86, and asparagine 179.

It belongs to the acetylglutamate kinase family. ArgB subfamily.

The protein resides in the plastid. It localises to the chloroplast. The enzyme catalyses N-acetyl-L-glutamate + ATP = N-acetyl-L-glutamyl 5-phosphate + ADP. Its pathway is amino-acid biosynthesis; L-arginine biosynthesis; N(2)-acetyl-L-ornithine from L-glutamate: step 2/4. Functionally, catalyzes the ATP-dependent phosphorylation of N-acetyl-L-glutamate. The polypeptide is Acetylglutamate kinase (Pyropia yezoensis (Susabi-nori)).